A 172-amino-acid polypeptide reads, in one-letter code: Small ribosomal subunit protein uS5 (172 aa).

The region spanning 17–80 (LREKMISVNR…EQARRNMFKV (64 aa)) is the S5 DRBM domain.

Belongs to the universal ribosomal protein uS5 family. Part of the 30S ribosomal subunit. Contacts proteins S4 and S8.

Its function is as follows. With S4 and S12 plays an important role in translational accuracy. Located at the back of the 30S subunit body where it stabilizes the conformation of the head with respect to the body. In Burkholderia orbicola (strain AU 1054), this protein is Small ribosomal subunit protein uS5.